Reading from the N-terminus, the 157-residue chain is 2-C-methyl-D-erythritol 2,4-cyclodiphosphate synthase (157 aa).

D9 and H11 together coordinate a divalent metal cation. 4-CDP-2-C-methyl-D-erythritol 2-phosphate contacts are provided by residues 9–11 and 35–36; these read DVH and HS. H43 contacts a divalent metal cation. 4-CDP-2-C-methyl-D-erythritol 2-phosphate is bound by residues 57-59, 62-66, 101-107, 133-136, F140, and R143; these read DIG, FPDTD, AEKPKMA, and TTTE.

The protein belongs to the IspF family. As to quaternary structure, homotrimer. It depends on a divalent metal cation as a cofactor.

The enzyme catalyses 4-CDP-2-C-methyl-D-erythritol 2-phosphate = 2-C-methyl-D-erythritol 2,4-cyclic diphosphate + CMP. Its pathway is isoprenoid biosynthesis; isopentenyl diphosphate biosynthesis via DXP pathway; isopentenyl diphosphate from 1-deoxy-D-xylulose 5-phosphate: step 4/6. In terms of biological role, involved in the biosynthesis of isopentenyl diphosphate (IPP) and dimethylallyl diphosphate (DMAPP), two major building blocks of isoprenoid compounds. Catalyzes the conversion of 4-diphosphocytidyl-2-C-methyl-D-erythritol 2-phosphate (CDP-ME2P) to 2-C-methyl-D-erythritol 2,4-cyclodiphosphate (ME-CPP) with a corresponding release of cytidine 5-monophosphate (CMP). The polypeptide is 2-C-methyl-D-erythritol 2,4-cyclodiphosphate synthase (Listeria innocua serovar 6a (strain ATCC BAA-680 / CLIP 11262)).